Consider the following 512-residue polypeptide: Bifunctional pantoate ligase/cytidylate kinase (512 aa).

Positions 1-276 (MKLQTSADLQ…CGEARLIDHR (276 aa)) are pantoate--beta-alanine ligase. Residue 27-34 (MGALHQGH) participates in ATP binding. Histidine 34 (proton donor) is an active-site residue. Glutamine 58 contributes to the (R)-pantoate binding site. Position 58 (glutamine 58) interacts with beta-alanine. 147-150 (GEKD) is a binding site for ATP. Residue glutamine 153 coordinates (R)-pantoate. ATP is bound by residues leucine 176 and 184–187 (LSSR). Residues 277-512 (VLMSRLPILA…VPVEALNADA (236 aa)) are cytidylate kinase.

The protein in the N-terminal section; belongs to the pantothenate synthetase family. This sequence in the C-terminal section; belongs to the cytidylate kinase family. Type 1 subfamily.

Its subcellular location is the cytoplasm. The catalysed reaction is (R)-pantoate + beta-alanine + ATP = (R)-pantothenate + AMP + diphosphate + H(+). It carries out the reaction CMP + ATP = CDP + ADP. It catalyses the reaction dCMP + ATP = dCDP + ADP. It participates in cofactor biosynthesis; (R)-pantothenate biosynthesis; (R)-pantothenate from (R)-pantoate and beta-alanine: step 1/1. Catalyzes the condensation of pantoate with beta-alanine in an ATP-dependent reaction via a pantoyl-adenylate intermediate. Functionally, catalyzes the transfer of a phosphate group from ATP to either CMP or dCMP to form CDP or dCDP and ADP, respectively. The sequence is that of Bifunctional pantoate ligase/cytidylate kinase from Synechococcus sp. (strain RCC307).